Reading from the N-terminus, the 292-residue chain is AKT-interacting protein (292 aa).

The tract at residues 1-63 (MNPLWSMSAG…TSPAPAAQST (63 aa)) is disordered. Residues 14–23 (KRAEGEEKTL) show a composition bias toward basic and acidic residues. Position 30 is a phosphoserine (Ser-30). The UBC core domain maps to 74-222 (YLEYSLLAEF…VVDSVKVCTA (149 aa)).

The protein belongs to the ubiquitin-conjugating enzyme family. FTS subfamily. As to quaternary structure, component of the FTS/Hook/FHIP complex (FHF complex), composed of AKTIP/FTS, FHIP1B, and one or more members of the Hook family of proteins HOOK1, HOOK2, and HOOK3. Interacts directly with HOOK1, HOOK2 and HOOK3. The FHF complex associates with the homotypic vesicular sorting complex (the HOPS complex). Also interacts with AKT1. May interact with FHIP1A. Ubiquitous. Highest expression in kidney, testis and brain and lowest in spleen and liver.

The protein resides in the cytoplasm. Its subcellular location is the cell membrane. Its function is as follows. Component of the FTS/Hook/FHIP complex (FHF complex). The FHF complex may function to promote vesicle trafficking and/or fusion via the homotypic vesicular protein sorting complex (the HOPS complex). Regulates apoptosis by enhancing phosphorylation and activation of AKT1. Increases release of TNFSF6 via the AKT1/GSK3B/NFATC1 signaling cascade. FHF complex promotes the distribution of AP-4 complex to the perinuclear area of the cell. In Mus musculus (Mouse), this protein is AKT-interacting protein (Aktip).